The sequence spans 932 residues: Alanine--tRNA ligase (932 aa).

Histidine 623, histidine 627, cysteine 726, and histidine 730 together coordinate Zn(2+). The segment at 893-916 (RVGGGGGGPPDFAQGGGPDVDSLD) is disordered. The span at 894–910 (VGGGGGGPPDFAQGGGP) shows a compositional bias: gly residues.

This sequence belongs to the class-II aminoacyl-tRNA synthetase family. It depends on Zn(2+) as a cofactor.

The protein localises to the cytoplasm. It carries out the reaction tRNA(Ala) + L-alanine + ATP = L-alanyl-tRNA(Ala) + AMP + diphosphate. Catalyzes the attachment of alanine to tRNA(Ala) in a two-step reaction: alanine is first activated by ATP to form Ala-AMP and then transferred to the acceptor end of tRNA(Ala). Also edits incorrectly charged Ser-tRNA(Ala) and Gly-tRNA(Ala) via its editing domain. This Natronomonas pharaonis (strain ATCC 35678 / DSM 2160 / CIP 103997 / JCM 8858 / NBRC 14720 / NCIMB 2260 / Gabara) (Halobacterium pharaonis) protein is Alanine--tRNA ligase.